The primary structure comprises 148 residues: Hemoglobin subunit beta-1 (148 aa).

One can recognise a Globin domain in the interval 3-148; that stretch reads EWTDAERTAI…VVSALCRQYH (146 aa). The heme b site is built by His-64 and His-93.

Heterotetramer of two alpha chains and two beta chains. As to expression, red blood cells.

Functionally, involved in oxygen transport from gills to the various peripheral tissues. The protein is Hemoglobin subunit beta-1 (ba1) of Danio rerio (Zebrafish).